Reading from the N-terminus, the 134-residue chain is MARVKRGVTSHAKHKKVLKQARGFYGRRKNTIRTAKAAVDRSKQYAYRDRKVNKRNFRALWIQRINAAVREHGLTYGRFIDGLTKAGIEVDRKVLSDMAIHETEAFGALVAASKKALEYLKDAGTKNEFEAAVN.

The protein belongs to the bacterial ribosomal protein bL20 family.

Its function is as follows. Binds directly to 23S ribosomal RNA and is necessary for the in vitro assembly process of the 50S ribosomal subunit. It is not involved in the protein synthesizing functions of that subunit. The chain is Large ribosomal subunit protein bL20 from Rhizobium rhizogenes (strain K84 / ATCC BAA-868) (Agrobacterium radiobacter).